Reading from the N-terminus, the 372-residue chain is Glutamate 5-kinase (372 aa).

Lys14 contributes to the ATP binding site. Substrate contacts are provided by Ser54, Asp141, and Asn153. 173–174 (TD) serves as a coordination point for ATP. The PUA domain maps to 280–358 (AGRIVLDQGA…TDILSILGFV (79 aa)).

It belongs to the glutamate 5-kinase family.

Its subcellular location is the cytoplasm. It catalyses the reaction L-glutamate + ATP = L-glutamyl 5-phosphate + ADP. It functions in the pathway amino-acid biosynthesis; L-proline biosynthesis; L-glutamate 5-semialdehyde from L-glutamate: step 1/2. In terms of biological role, catalyzes the transfer of a phosphate group to glutamate to form L-glutamate 5-phosphate. This Herminiimonas arsenicoxydans protein is Glutamate 5-kinase.